The chain runs to 228 residues: Ribosomal RNA small subunit methyltransferase G (228 aa).

S-adenosyl-L-methionine is bound by residues Gly-89, Leu-94, 140–141, and Arg-159; that span reads VE.

Belongs to the methyltransferase superfamily. RNA methyltransferase RsmG family.

It localises to the cytoplasm. It carries out the reaction guanosine(527) in 16S rRNA + S-adenosyl-L-methionine = N(7)-methylguanosine(527) in 16S rRNA + S-adenosyl-L-homocysteine. In terms of biological role, specifically methylates the N7 position of guanine in position 527 of 16S rRNA. In Burkholderia cenocepacia (strain ATCC BAA-245 / DSM 16553 / LMG 16656 / NCTC 13227 / J2315 / CF5610) (Burkholderia cepacia (strain J2315)), this protein is Ribosomal RNA small subunit methyltransferase G.